Reading from the N-terminus, the 243-residue chain is DNA repair protein RecO (243 aa).

The protein belongs to the RecO family.

In terms of biological role, involved in DNA repair and RecF pathway recombination. The chain is DNA repair protein RecO from Geobacter sulfurreducens (strain ATCC 51573 / DSM 12127 / PCA).